A 201-amino-acid chain; its full sequence is Small ribosomal subunit protein uS5 (201 aa).

The tract at residues 1-28 (MAGPQRRGSGAGGGERRDRKGRDGGAGA) is disordered. Positions 14-23 (GERRDRKGRD) are enriched in basic and acidic residues. The region spanning 34–97 (YVERVVAINR…EEAKKHFFKV (64 aa)) is the S5 DRBM domain.

The protein belongs to the universal ribosomal protein uS5 family. In terms of assembly, part of the 30S ribosomal subunit. Contacts proteins S4 and S8.

Functionally, with S4 and S12 plays an important role in translational accuracy. Its function is as follows. Located at the back of the 30S subunit body where it stabilizes the conformation of the head with respect to the body. This is Small ribosomal subunit protein uS5 from Streptomyces coelicolor (strain ATCC BAA-471 / A3(2) / M145).